The sequence spans 218 residues: Histidine biosynthesis bifunctional protein HisIE (218 aa).

The tract at residues 1-118 (MTDLSELNFD…DAPDTGLDGT (118 aa)) is phosphoribosyl-AMP cyclohydrolase. Residues 119-218 (LERVYATITE…SGLKGPKEVG (100 aa)) are phosphoribosyl-ATP pyrophosphohydrolase.

The protein in the N-terminal section; belongs to the PRA-CH family. In the C-terminal section; belongs to the PRA-PH family.

The protein localises to the cytoplasm. It catalyses the reaction 1-(5-phospho-beta-D-ribosyl)-ATP + H2O = 1-(5-phospho-beta-D-ribosyl)-5'-AMP + diphosphate + H(+). The enzyme catalyses 1-(5-phospho-beta-D-ribosyl)-5'-AMP + H2O = 1-(5-phospho-beta-D-ribosyl)-5-[(5-phospho-beta-D-ribosylamino)methylideneamino]imidazole-4-carboxamide. Its pathway is amino-acid biosynthesis; L-histidine biosynthesis; L-histidine from 5-phospho-alpha-D-ribose 1-diphosphate: step 2/9. It participates in amino-acid biosynthesis; L-histidine biosynthesis; L-histidine from 5-phospho-alpha-D-ribose 1-diphosphate: step 3/9. This Deinococcus radiodurans (strain ATCC 13939 / DSM 20539 / JCM 16871 / CCUG 27074 / LMG 4051 / NBRC 15346 / NCIMB 9279 / VKM B-1422 / R1) protein is Histidine biosynthesis bifunctional protein HisIE (hisI).